We begin with the raw amino-acid sequence, 308 residues long: Mannan endo-1,4-beta-mannosidase (308 aa).

The active-site Proton donor is Glu125. Residue Glu220 is the Nucleophile of the active site. Positions 284 to 308 (DGLQETSKPSTVFTDDNGGHPEPPT) are disordered. Residues 287–297 (QETSKPSTVFT) are compositionally biased toward polar residues.

Belongs to the glycosyl hydrolase 5 (cellulase A) family.

It carries out the reaction Random hydrolysis of (1-&gt;4)-beta-D-mannosidic linkages in mannans, galactomannans and glucomannans.. Functionally, catalyzes the endo hydrolysis of beta-1,4-linked mannan, galactomannan and glucomannan. It is able to hydrolyze mannosidic linkages that are flanked by mannose or glucose. The polypeptide is Mannan endo-1,4-beta-mannosidase (Salipaludibacillus agaradhaerens (Bacillus agaradhaerens)).